A 260-amino-acid chain; its full sequence is Exosome complex component Rrp4 (260 aa).

Positions 59–128 (NDVVIGIVIV…NSMKVELALR (70 aa)) constitute an S1 motif domain. The region spanning 136–194 (KTGQIVEVEPVKVPRVIGHGGSMISMLKKETNCSIFVGQNGRIWIDGKDDDVELLSKAL) is the KH domain.

This sequence belongs to the RRP4 family. As to quaternary structure, component of the archaeal exosome complex. Forms a trimer of Rrp4 and/or Csl4 subunits. The trimer associates with a hexameric ring-like arrangement composed of 3 Rrp41-Rrp42 heterodimers.

It is found in the cytoplasm. Its function is as follows. Non-catalytic component of the exosome, which is a complex involved in RNA degradation. Increases the RNA binding and the efficiency of RNA degradation. Confers strong poly(A) specificity to the exosome. The protein is Exosome complex component Rrp4 of Methanosarcina barkeri (strain Fusaro / DSM 804).